Consider the following 330-residue polypeptide: Probable xanthine dehydrogenase subunit A (330 aa).

Could be composed of four subunits: PucA, PucC, PucD and PucE.

It catalyses the reaction xanthine + NAD(+) + H2O = urate + NADH + H(+). The catalysed reaction is hypoxanthine + NAD(+) + H2O = xanthine + NADH + H(+). It functions in the pathway purine metabolism; hypoxanthine degradation; urate from hypoxanthine: step 1/2. The protein operates within purine metabolism; hypoxanthine degradation; urate from hypoxanthine: step 2/2. In terms of biological role, oxidizes hypoxanthine and xanthine to uric acid. PucA subunit could exert a molybdenum cofactor recruiting function. The sequence is that of Probable xanthine dehydrogenase subunit A (pucA) from Bacillus subtilis (strain 168).